Reading from the N-terminus, the 556-residue chain is Formate--tetrahydrofolate ligase (556 aa).

65–72 (TPAGEGKT) is a binding site for ATP.

This sequence belongs to the formate--tetrahydrofolate ligase family.

It catalyses the reaction (6S)-5,6,7,8-tetrahydrofolate + formate + ATP = (6R)-10-formyltetrahydrofolate + ADP + phosphate. It functions in the pathway one-carbon metabolism; tetrahydrofolate interconversion. This is Formate--tetrahydrofolate ligase from Proteus mirabilis (strain HI4320).